The chain runs to 129 residues: MAKTPVRARKRVKKQVVDGVAHIHASFNNTIVTITDRQGNALAWATAGGSGFRGSRKSTPFAAQVAAERCAEIVKEFGLKNLEVMVKGPGPGRESTIRALNAAGFRITNITDVTPIPHNGCRPPKKRRV.

It belongs to the universal ribosomal protein uS11 family. In terms of assembly, part of the 30S ribosomal subunit. Interacts with proteins S7 and S18. Binds to IF-3.

Functionally, located on the platform of the 30S subunit, it bridges several disparate RNA helices of the 16S rRNA. Forms part of the Shine-Dalgarno cleft in the 70S ribosome. The polypeptide is Small ribosomal subunit protein uS11 (Haemophilus influenzae (strain 86-028NP)).